The following is a 365-amino-acid chain: Endophilin-B1 (365 aa).

Position 1 is an N-acetylmethionine (M1). The interval 1–30 (MNIMDFNVKKLAADAGTFLSRAVQFTEEKL) is membrane-binding amphipathic helix. The tract at residues 1-37 (MNIMDFNVKKLAADAGTFLSRAVQFTEEKLGQAEKTE) is required for membrane binding. The region spanning 27–261 (EEKLGQAEKT…LGSFPSNYVS (235 aa)) is the BAR domain. Residue T145 is modified to Phosphothreonine; by CDK5. Residues 156–185 (KTIAKERKLLQNKRLDLDAAKTRLKKAKAA) are a coiled coil. The SH3 domain maps to 305 to 365 (SSTRKARVLY…VPITYLELLN (61 aa)).

It belongs to the endophilin family. Homodimer, and heterodimer with SH3GLB2. Binds BAX; induction of apoptosis augments BAX binding. Binds DNM1, HTT, AMPH, BIN1 and ARFGAP1. Interacts with UVRAG; UVRAG bridges the interaction to BECN1 indicative for an association with the PI3K complex II (PI3KC3-C2). Phosphorylated at Thr-145 by CDK5; this phosphorylation is required for autophagy induction in starved neurons and facilitates homodimerization. As to expression, expressed in brain, heart, lung and spleen. Low level in liver and testis.

It is found in the cytoplasm. Its subcellular location is the golgi apparatus membrane. The protein localises to the mitochondrion outer membrane. The protein resides in the cytoplasmic vesicle. It localises to the autophagosome membrane. It is found in the midbody. In terms of biological role, may be required for normal outer mitochondrial membrane dynamics. Required for coatomer-mediated retrograde transport in certain cells. May recruit other proteins to membranes with high curvature. May promote membrane fusion. Involved in activation of caspase-dependent apoptosis by promoting BAX/BAK1 activation. Involved in caspase-independent apoptosis during nutrition starvation and involved in the regulation of autophagy. Activates lipid kinase activity of PIK3C3 during autophagy probably by associating with the PI3K complex II (PI3KC3-C2). Associated with PI3KC3-C2 during autophagy may regulate the trafficking of ATG9A from the Golgi complex to the peripheral cytoplasm for the formation of autophagosomes by inducing Golgi membrane tubulation and fragmentation. Involved in regulation of degradative endocytic trafficking and cytokinesis, probably in the context of PI3KC3-C2. The sequence is that of Endophilin-B1 from Rattus norvegicus (Rat).